A 234-amino-acid chain; its full sequence is Ribose-5-phosphate isomerase A (234 aa).

Residues 34 to 37 (TGST), 90 to 93 (DGAD), and 103 to 106 (KGGG) contribute to the substrate site. The Proton acceptor role is filled by Glu-112. Lys-130 lines the substrate pocket.

It belongs to the ribose 5-phosphate isomerase family. In terms of assembly, homodimer.

The enzyme catalyses aldehydo-D-ribose 5-phosphate = D-ribulose 5-phosphate. It participates in carbohydrate degradation; pentose phosphate pathway; D-ribose 5-phosphate from D-ribulose 5-phosphate (non-oxidative stage): step 1/1. Catalyzes the reversible conversion of ribose-5-phosphate to ribulose 5-phosphate. The sequence is that of Ribose-5-phosphate isomerase A from Methanosarcina acetivorans (strain ATCC 35395 / DSM 2834 / JCM 12185 / C2A).